Reading from the N-terminus, the 112-residue chain is Signal peptidase complex-like protein DTM1 (112 aa).

The first 25 residues, 1 to 25, serve as a signal peptide directing secretion; the sequence is MGRDEMLRRSLVALAAAVVVTGVVT. A run of 2 helical transmembrane segments spans residues 33 to 53 and 92 to 112; these read ATYG…WEFF and MAML…YVSS.

It belongs to the SPCS1 family.

The protein resides in the endoplasmic reticulum membrane. In terms of biological role, functions in tapetum development during early meiosis. May play a role in the endoplasmic reticulum (ER) membrane in the early stages of tapetum development in anthers. Seems to function after MSP1 and before UDT1. The protein is Signal peptidase complex-like protein DTM1 of Oryza sativa subsp. japonica (Rice).